Here is a 440-residue protein sequence, read N- to C-terminus: Methionine aminopeptidase 2-2 (440 aa).

Residues 1–102 form a disordered region; the sequence is MAAQVPTEAL…KGQEEEYRDE (102 aa). The segment covering 36 to 46 has biased composition (acidic residues); that stretch reads DSDDSDEEGEE. Over residues 56-70 the composition is skewed to basic residues; it reads AKKKKKNKKKKKKKS. Residue H194 coordinates substrate. A divalent metal cation is bound by residues D214, D225, and H294. Position 302 (H302) interacts with substrate. Residues E327 and E421 each coordinate a divalent metal cation.

The protein belongs to the peptidase M24A family. Methionine aminopeptidase eukaryotic type 2 subfamily. Co(2+) serves as cofactor. It depends on Zn(2+) as a cofactor. The cofactor is Mn(2+). Fe(2+) is required as a cofactor.

It localises to the cytoplasm. It carries out the reaction Release of N-terminal amino acids, preferentially methionine, from peptides and arylamides.. In terms of biological role, cotranslationally removes the N-terminal methionine from nascent proteins. The N-terminal methionine is often cleaved when the second residue in the primary sequence is small and uncharged (Met-Ala-, Cys, Gly, Pro, Ser, Thr, or Val). This is Methionine aminopeptidase 2-2 from Colletotrichum graminicola (strain M1.001 / M2 / FGSC 10212) (Maize anthracnose fungus).